Reading from the N-terminus, the 76-residue chain is Tautomerase PptA (76 aa).

Catalysis depends on Pro2, which acts as the Proton acceptor; via imino nitrogen.

This sequence belongs to the 4-oxalocrotonate tautomerase family. PptA subfamily. As to quaternary structure, homodimer.

It is found in the cytoplasm. The chain is Tautomerase PptA from Cronobacter sakazakii (strain ATCC BAA-894) (Enterobacter sakazakii).